The primary structure comprises 121 residues: Large ribosomal subunit protein uL18 (121 aa).

Positions 1–25 (MKIVISKPDKNKIRQKRHRRVRGKL) are disordered. The segment covering 13-23 (IRQKRHRRVRG) has biased composition (basic residues).

It belongs to the universal ribosomal protein uL18 family. In terms of assembly, part of the 50S ribosomal subunit; part of the 5S rRNA/L5/L18/L25 subcomplex. Contacts the 5S and 23S rRNAs.

This is one of the proteins that bind and probably mediate the attachment of the 5S RNA into the large ribosomal subunit, where it forms part of the central protuberance. The chain is Large ribosomal subunit protein uL18 from Streptococcus pyogenes serotype M28 (strain MGAS6180).